Here is a 360-residue protein sequence, read N- to C-terminus: MEKEKKGAKHELDLSSILQFVAPGTPLRAGMENVLRANTGGLIVVGYNDKVKEVVDGGFHINTAFSPAHLYELAKMDGAIILSDSGQKILYANTQLMPDATISSSETGMRHRTAERVAKQTGCLVIAISERRNVITLYQENMKYTLKDIGFILTKANQAIQTLEKYKTILDKTINALNALEFEELVTFSDVLSVMHRYEMVLRIKNEINMYIKELGTEGHLIKLQVIELITDMEEEAALFIKDYVKEKIKDPFVLLKELQDMSSYDLLDDSIVYKLLGYPASTNLDDYVLPRGYRLLNKIPRLPMPIVENVVEAFGVLPRIIEASAEELDEVEGIGEVRAQKIKKGLKRLQEKHYLDRQL.

In terms of domain architecture, DAC spans 11-149 (ELDLSSILQF…ENMKYTLKDI (139 aa)). ATP contacts are provided by residues glycine 78, leucine 96, and 109-113 (MRHRT).

It belongs to the DisA family. In terms of assembly, homooligomer. Interacts with RadA. The cofactor is Mg(2+).

The protein localises to the cytoplasm. It carries out the reaction 2 ATP = 3',3'-c-di-AMP + 2 diphosphate. With respect to regulation, diadenylate cyclase (DAC) activity is inhibited 2-fold by Holliday junction (HJ) DNA, further addition of RecG inhibits DAC activity 11-fold; RecG may relocate DisA from the HJ. DAC is inhibited by the interaction with RadA. Diadenylate cyclase activity is not affected by ssDNA or dsDNA, but three- and four-way junctions strongly inhibit the activity of DisA, suggesting the enzyme is regulated by branched nucleic acids. Functionally, participates in a DNA-damage check-point that is active prior to asymmetric division when DNA is damaged. Forms globular foci that rapidly scan along the chromosomes during sporulation, searching for lesions. Its ability to scan through the chromosome rapidly is due to its non-specific DNA-binding. When a lesion is present, DisA pauses at the lesion site. This triggers a cellular response that culminates in a temporary block in sporulation initiation. It is required, at least partially, to inhibit the activity of the transcription factor spo0A, which controls, among others, early sporulation genes. In B.subtilis c-di-AMP is a second messenger that mediates growth, DNA repair and cell wall homeostasis; it is toxic when present in excess. Limits the replication fork reggression activity of RecG; DisA inhibits the ATPase activity of RecG. By limiting RecG-mediated fork regression, DisA provides time for removal of potentially lethal DNA lesions. In terms of biological role, one of 3 paralogous diadenylate cyclases (DAC) in this bacteria. Has diadenylate cyclase activity, catalyzing the condensation of 2 ATP molecules into cyclic di-AMP (c-di-AMP). c-di-AMP acts as a signaling molecule that couples DNA integrity with progression of sporulation. The rise in c-di-AMP level generated by DisA while scanning the chromosome operates as a positive signal that advances sporulation; upon encountering a lesion, the DisA focus arrests at the damaged site and halts c-di-AMP synthesis. Does not convert GTP to c-di-GMP. In Bacillus subtilis (strain 168), this protein is DNA integrity scanning protein DisA.